Consider the following 148-residue polypeptide: Major microfilarial sheath protein (148 aa).

An N-terminal signal peptide occupies residues 1–18; it reads MCCKAILSFCILSSLGNA. A propeptide spans 19–43 (removed in mature form); sequence LYFGSHRPQYLREVGQRQYPFEPQA. Repeats lie at residues 46-50, 54-58, 59-63, 64-68, and 71-75; these read MLPVP, MGPQP, MEPQP, and MGPQS. Positions 46–75 are repeat-rich region; that stretch reads MLPVPQQPMGPQPMGPQPMEPQPLPMGPQS. Residues 52-73 are compositionally biased toward pro residues; sequence QPMGPQPMGPQPMEPQPLPMGP. Positions 52–80 are disordered; that stretch reads QPMGPQPMGPQPMEPQPLPMGPQSPQMQV.

To B.pahangi filarial sheath protein. Post-translationally, O-glycosylated.

This Litomosoides carinii protein is Major microfilarial sheath protein (GP22).